The following is a 295-amino-acid chain: GTPase Era (295 aa).

An Era-type G domain is found at 3 to 170; the sequence is KSGFVTIVGR…VDLMKTELPE (168 aa). The G1 stretch occupies residues 11–18; sequence GRPNVGKS. 11-18 contacts GTP; the sequence is GRPNVGKS. A G2 region spans residues 37–41; it reads QTTRN. The segment at 58-61 is G3; the sequence is DTPG. GTP is bound by residues 58–62 and 120–123; these read DTPGI and NKID. Positions 120–123 are G4; it reads NKID. The interval 149 to 151 is G5; that stretch reads IAA. One can recognise a KH type-2 domain in the interval 201–278; it reads LRDEVPHGIA…NVKIWVKVRK (78 aa).

Belongs to the TRAFAC class TrmE-Era-EngA-EngB-Septin-like GTPase superfamily. Era GTPase family. Monomer.

It is found in the cytoplasm. The protein resides in the cell membrane. Functionally, an essential GTPase that binds both GDP and GTP, with rapid nucleotide exchange. Plays a role in 16S rRNA processing and 30S ribosomal subunit biogenesis and possibly also in cell cycle regulation and energy metabolism. The protein is GTPase Era of Clostridium botulinum (strain Eklund 17B / Type B).